Here is an 868-residue protein sequence, read N- to C-terminus: Translation initiation factor IF-2 (868 aa).

Residues 199 to 209 show a composition bias toward basic and acidic residues; sequence SKKEEVKPEKV. The segment at 199–269 is disordered; it reads SKKEEVKPEK…GTEKSDKYRE (71 aa). The span at 249–260 shows a compositional bias: basic residues; that stretch reads RGGRSKFKKKKG. The 170-residue stretch at 368-537 folds into the tr-type G domain; it reads GRAPVVTIMG…LLQSEVLELK (170 aa). Positions 377–384 are G1; it reads GHVDHGKT. 377–384 lines the GTP pocket; sequence GHVDHGKT. Positions 402–406 are G2; it reads GITQH. The segment at 423-426 is G3; it reads DTPG. GTP is bound by residues 423 to 427 and 477 to 480; these read DTPGH and NKMD. The G4 stretch occupies residues 477–480; that stretch reads NKMD. The interval 513-515 is G5; it reads SAK.

Belongs to the TRAFAC class translation factor GTPase superfamily. Classic translation factor GTPase family. IF-2 subfamily.

It localises to the cytoplasm. One of the essential components for the initiation of protein synthesis. Protects formylmethionyl-tRNA from spontaneous hydrolysis and promotes its binding to the 30S ribosomal subunits. Also involved in the hydrolysis of GTP during the formation of the 70S ribosomal complex. The sequence is that of Translation initiation factor IF-2 from Legionella pneumophila (strain Paris).